We begin with the raw amino-acid sequence, 252 residues long: Phosphomannomutase (252 aa).

The active-site Nucleophile is the Asp13. Mg(2+) is bound by residues Asp13 and Asp15. Asp15 (proton donor/acceptor) is an active-site residue. The alpha-D-mannose 1-phosphate site is built by Arg22, Arg124, Arg135, Arg142, Ser180, and Asp182. Mg(2+) contacts are provided by Asp208, Tyr220, and Thr225.

Belongs to the eukaryotic PMM family. Homodimer. Mg(2+) serves as cofactor. In terms of tissue distribution, expressed in roots, leaves, stems and flowers.

Its subcellular location is the cytoplasm. It catalyses the reaction alpha-D-mannose 1-phosphate = D-mannose 6-phosphate. The protein operates within nucleotide-sugar biosynthesis; GDP-alpha-D-mannose biosynthesis; alpha-D-mannose 1-phosphate from D-fructose 6-phosphate: step 2/2. Its function is as follows. Catalyzes the interconversion of mannose-6-phosphate to mannose-1-phosphate, the precursor for the synthesis of GDP-mannose. GDP-mannose is an essential sugar nucleotide for the synthesis of D-mannose-containing cell wall polysaccharides (galactomannans and glucomannans), glycolipids, glycoproteins and the antioxidant L-ascorbate. Involved in the biosynthesis of ascorbate and polysaccharides in response to abiotic stress during seed germination. The protein is Phosphomannomutase of Dendrobium officinale (Orchid).